Here is a 366-residue protein sequence, read N- to C-terminus: Leucine-rich repeat-containing protein 58 (366 aa).

Position 19 is a phosphoserine (S19). LRR repeat units lie at residues 40 to 61 (ALLR…LGGG), 64 to 86 (HLQL…LTLS), 87 to 108 (GLRT…PKGL), 116 to 138 (SLQV…LELR), 139 to 161 (ALQT…ENLR), 162 to 184 (SLEC…ANLP), 185 to 206 (SLNY…LSQL), 208 to 229 (SLRS…ILNL), and 231 to 251 (HLEE…RDLT). The span at 337-346 (ASHSSTSQSE) shows a compositional bias: low complexity. Residues 337–356 (ASHSSTSQSESDSEDEASVA) are disordered.

In Mus musculus (Mouse), this protein is Leucine-rich repeat-containing protein 58 (Lrrc58).